The following is a 690-amino-acid chain: Eukaryotic translation initiation factor 3 subunit B (690 aa).

Residues 1–11 (MAKKKSEEHSG) show a composition bias toward basic and acidic residues. The interval 1-36 (MAKKKSEEHSGADANDSDYQEEPNFEDPPGFVDNIS) is disordered. A compositionally biased stretch (acidic residues) spans 15-25 (NDSDYQEEPNF). Positions 57-141 (SVVVVDNIPK…HTFAVNLFTD (85 aa)) constitute an RRM domain. WD repeat units lie at residues 207 to 246 (TRER…KIQK), 293 to 331 (DGMS…LLDL), 334 to 369 (IKIP…TLME), 442 to 484 (EIRE…KPSL), and 530 to 575 (PDHF…IKRT). Residues 595–645 (EEKQKEIKKNLKKYYAAFEQKDRLRLTRASKELLEKRSQLRETFMEYRNKR) are a coiled coil.

This sequence belongs to the eIF-3 subunit B family. As to quaternary structure, component of the eukaryotic translation initiation factor 3 (eIF-3) complex. The eIF-3 complex interacts with pix. Interacts with mxt.

The protein localises to the cytoplasm. Its function is as follows. RNA-binding component of the eukaryotic translation initiation factor 3 (eIF-3) complex, which is involved in protein synthesis of a specialized repertoire of mRNAs and, together with other initiation factors, stimulates binding of mRNA and methionyl-tRNAi to the 40S ribosome. The eIF-3 complex specifically targets and initiates translation of a subset of mRNAs involved in cell proliferation. This chain is Eukaryotic translation initiation factor 3 subunit B, found in Drosophila erecta (Fruit fly).